Consider the following 644-residue polypeptide: Sodium/hydrogen exchanger 9 (644 aa).

Topologically, residues 1-20 (MERQRRFMSEKDEYQFQHQG) are lumenal. Residues 21–41 (AVELLVFNFLLILTILTIWLF) traverse the membrane as a helical segment. Residues 42–45 (KNHR) are Cytoplasmic-facing. The helical transmembrane segment at 46–66 (FRFLHETGGAMVYGLIMGLIL) threads the bilayer. Topologically, residues 67–126 (RYATAPTDIESGTVYDCGKLAFSPSTLLINITDQVYEYKYKREISQHNINPHLGNAILEK) are lumenal. The chain crosses the membrane as a helical span at residues 127-147 (MTFDPEIFFNVLLPPIIFHAG). The Cytoplasmic portion of the chain corresponds to 148-164 (YSLKKRHFFQNLGSILT). Residues 165-185 (YAFLGTAISCIVIGLIMYGFV) traverse the membrane as a helical segment. Over 186–203 (KAMVYAGQLKNGDFHFTD) the chain is Lumenal. The helical transmembrane segment at 204–224 (CLFFGSLMSATDPVTVLAIFH) threads the bilayer. The Cytoplasmic segment spans residues 225-235 (ELHVDPDLYTL). The chain crosses the membrane as a helical span at residues 236-256 (LFGESVLNDAVAIVLTYSISI). At 257-277 (YSPKENPNAFDAAAFFQSVGN) the chain is on the lumenal side. A helical transmembrane segment spans residues 278-298 (FLGIFAGSFAMGSAYAVVTAL). Residues 299 to 301 (LTK) lie on the Cytoplasmic side of the membrane. A run of 2 helical transmembrane segments spans residues 302-322 (FTKL…LSWS) and 323-343 (AFLS…FCGV). Residues 344-364 (TQAHYTYNNLSLDSKMRTKQL) are Cytoplasmic-facing. Residues 365–385 (FEFMNFLAENVIFCYMGLALF) traverse the membrane as a helical segment. Position 386 (threonine 386) is a topological domain, lumenal. The helical transmembrane segment at 387–407 (FQNHIFNALFILGAFLAIFVA) threads the bilayer. Over 408-429 (RACNIYPLSFLLNLGRKHKIPW) the chain is Cytoplasmic. The helical transmembrane segment at 430 to 450 (NFQHMMMFSGLRGAIAFALAI) threads the bilayer. The Lumenal portion of the chain corresponds to 451-465 (RDTESQPKQMMFSTT). Residues 466–486 (LLLVFFTVWVFGGGTTPMLTW) traverse the membrane as a helical segment. The Cytoplasmic portion of the chain corresponds to 487-644 (LQIRVGVDLD…EQTPGQSQLN (158 aa)). The tract at residues 593 to 622 (QAASPCSPPTRLGLDQKAAPQTPGKENIYE) is disordered.

The protein belongs to the monovalent cation:proton antiporter 1 (CPA1) transporter (TC 2.A.36) family. As to quaternary structure, homodimer; phosphatidylinositol-4,5-bisphosphate (PIP2) and phosphatidylinositol 3,4,5-trisphosphate (PIP3) could be involved in the dimer stabilization. Interacts (via the C-terminus) with RACK1. Interacts with CHP1.

The protein localises to the late endosome membrane. Its subcellular location is the early endosome membrane. It localises to the recycling endosome membrane. The protein resides in the cell membrane. It is found in the cytoplasmic vesicle. The protein localises to the phagosome membrane. It carries out the reaction Na(+)(in) + H(+)(out) = Na(+)(out) + H(+)(in). The enzyme catalyses K(+)(in) + H(+)(out) = K(+)(out) + H(+)(in). Functionally, endosomal Na(+), K(+)/H(+) antiporter. Mediates the electroneutral exchange of endosomal luminal H(+) for a cytosolic Na(+) or K(+). By facilitating proton efflux, SLC9A9 counteracts the acidity generated by vacuolar (V)-ATPase, thereby limiting luminal acidification. Regulates organellar pH and consequently, endosome maturation and endocytic trafficking of plasma membrane receptors and neurotransporters. Promotes the recycling of transferrin receptors back to the cell surface to facilitate additional iron uptake in the brain. Regulates synaptic transmission by regulating the luminal pH of axonal endosomes. Regulates phagosome lumenal pH, thus affecting phagosome maturation, and consequently, microbicidal activity in macrophages. Can also be active at the cell surface of specialized cells, e.g., in the inner ear hair bundles uses the high K(+) of the endolymph to regulate intracelular pH. The polypeptide is Sodium/hydrogen exchanger 9 (SLC9A9) (Equus caballus (Horse)).